A 60-amino-acid polypeptide reads, in one-letter code: Large ribosomal subunit protein uL30 (60 aa).

It belongs to the universal ribosomal protein uL30 family. As to quaternary structure, part of the 50S ribosomal subunit.

This is Large ribosomal subunit protein uL30 from Burkholderia ambifaria (strain MC40-6).